Consider the following 216-residue polypeptide: Endoplasmic reticulum vesicle protein 25 (216 aa).

A signal peptide spans 1-21 (MMVSLKSSLFFMLALLTVVHA). The Lumenal portion of the chain corresponds to 22–184 (LNFDIPAKTN…TNESTNERVK (163 aa)). Residues 34–150 (PFCLREYVGE…LEPVEADIRR (117 aa)) form the GOLD domain. A helical transmembrane segment spans residues 185–205 (NFAYLTFISLFVLVIWQILYL). Residues 206 to 216 (RSFFQRKHLIP) are Cytoplasmic-facing.

The protein belongs to the EMP24/GP25L family.

The protein localises to the endoplasmic reticulum membrane. It localises to the golgi apparatus membrane. Constituent of COPII-coated endoplasmic reticulum-derived transport vesicles. Required for efficient transport of a subset of secretory proteins to the Golgi. Facilitates retrograde transport from the Golgi to the endoplasmic reticulum. The protein is Endoplasmic reticulum vesicle protein 25 (erv25) of Schizosaccharomyces pombe (strain 972 / ATCC 24843) (Fission yeast).